The chain runs to 216 residues: Probable GTP-binding protein EngB (216 aa).

An EngB-type G domain is found at 27–201 (EGIEVAFAGR…SQKLNTWFNE (175 aa)). GTP is bound by residues 35-42 (GRSNAGKS), 62-66 (GRTQL), 80-83 (DLPG), 147-150 (TKAD), and 180-182 (FSS). Positions 42 and 64 each coordinate Mg(2+).

This sequence belongs to the TRAFAC class TrmE-Era-EngA-EngB-Septin-like GTPase superfamily. EngB GTPase family. Requires Mg(2+) as cofactor.

Its function is as follows. Necessary for normal cell division and for the maintenance of normal septation. This chain is Probable GTP-binding protein EngB, found in Serratia proteamaculans (strain 568).